The sequence spans 882 residues: DNA mismatch repair protein MutS (882 aa).

An ATP-binding site is contributed by Gly635–Ser642.

This sequence belongs to the DNA mismatch repair MutS family.

Functionally, this protein is involved in the repair of mismatches in DNA. It is possible that it carries out the mismatch recognition step. This protein has a weak ATPase activity. The chain is DNA mismatch repair protein MutS from Janthinobacterium sp. (strain Marseille) (Minibacterium massiliensis).